The sequence spans 151 residues: Alpha-latroinsectotoxin-Lh1a (151 aa).

ANK repeat units lie at residues 21–37 (TDVTQTLIDITEIDLNA), 41–52 (ILIRNTNAVINI), 56–80 (VGLTPLHLATLQNNLSVSKGAYLND), 84–104 (NGMTPLHYAAMTGNLEMVDFL), 105–116 (KWTPLHLAILFK), 117–125 (QLVIELLAK), 126–146 (TFFDLAIENGRLNIVAFAVEK), and 147–151 (YIAAR).

It belongs to the cationic peptide 01 (latrotoxin) family. 02 (alpha-latroinsectotoxin) subfamily. Homotetramer in membranes. Expressed by the venom gland.

It localises to the secreted. Its subcellular location is the target cell membrane. Functionally, insecticidal presynaptic neurotoxin that induces massive neurotransmitter release at insect (but not vertebrate) neuromuscular junctions. Native toxin forms cation-permeable pores (with high permeability to calcium) in lipid membranes locust muscle membrane and artificial lipid bilayers. May bind to insect neurexin-1 homolog, insect adhesion G protein-coupled receptor L1 homolog, and insect receptor-type tyrosine-protein phosphatase S homolog, and induces neurotransmitter exocytosis both by forming tetrameric pores in membranes and signaling via G protein-coupled receptor. Oligomerization is a process independent of divalent cations. The toxin forms channels with 0.55-0.58 nm entrance diameter and a relatively small conductance in planar phospholipid membranes. This chain is Alpha-latroinsectotoxin-Lh1a, found in Latrodectus hasselti (Redback spider).